The primary structure comprises 558 residues: Tektin-5 (558 aa).

Positions isoleucine 347–alanine 381 form a coiled coil.

The protein belongs to the tektin family. Microtubule inner protein component of sperm flagellar doublet microtubules. Interacts with TEKT3. Ubiquitinated, leading to its degradation. Deubiquitinated by USP16, promoting its stability. Specifically expressed in testis.

It localises to the cytoplasm. Its subcellular location is the cytoskeleton. The protein resides in the flagellum axoneme. Its function is as follows. Sperm-specific microtubule inner protein (MIP) part of the dynein-decorated doublet microtubules (DMTs) in flagellar axoneme. Forms an extensive interaction network in different conformations that reinforces the helix bundle composed by other tektin proteins (TEKT1 to TEKT4) and MIPs to anchor the tektin bundle onto the tubulin wall of A-tubule of the sperm flagellum. The sequence is that of Tektin-5 from Rattus norvegicus (Rat).